We begin with the raw amino-acid sequence, 132 residues long: Small ribosomal subunit protein uS8 (132 aa).

It belongs to the universal ribosomal protein uS8 family. In terms of assembly, part of the 30S ribosomal subunit. Contacts proteins S5 and S12.

Functionally, one of the primary rRNA binding proteins, it binds directly to 16S rRNA central domain where it helps coordinate assembly of the platform of the 30S subunit. The sequence is that of Small ribosomal subunit protein uS8 from Arthrobacter sp. (strain FB24).